The following is a 142-amino-acid chain: UPF0102 protein Synpcc7942_0312 (142 aa).

This sequence belongs to the UPF0102 family.

This Synechococcus elongatus (strain ATCC 33912 / PCC 7942 / FACHB-805) (Anacystis nidulans R2) protein is UPF0102 protein Synpcc7942_0312.